A 637-amino-acid chain; its full sequence is Serine protease Hayan (637 aa).

The N-terminal stretch at 1–26 (MAMISARRYFLLGLLVLTTSAYVTVG) is a signal peptide. One can recognise a Clip domain in the interval 31–79 (PCQVRSDIPGICLSSSACENIRGYLKSGTLSTSQVPSCGFGAREEIICC). 3 cysteine pairs are disulfide-bonded: Cys-32–Cys-78, Cys-42–Cys-68, and Cys-48–Cys-79. Disordered stretches follow at residues 95 to 137 (FHAT…LDEN), 152 to 178 (KPQK…SMKM), 216 to 260 (QRSF…NNNN), and 286 to 365 (LQTT…EKER). Residues 125-136 (EGKRERESRLDE) show a composition bias toward basic and acidic residues. Residues 234–244 (PLTTPRSRPQR) are compositionally biased toward polar residues. Over residues 245–260 (PNNSNFNTNPSPNNNN) the composition is skewed to low complexity. Residues 306-320 (EPYRFRGQDRDKDTQ) show a composition bias toward basic and acidic residues. Polar residues predominate over residues 321–332 (PQEPWNDVSNNL). Intrachain disulfides connect Cys-371/Cys-497, Cys-414/Cys-430, Cys-543/Cys-567, and Cys-578/Cys-609. The Peptidase S1 domain maps to 385-632 (ILDGERVDRG…FLDYIEGIVW (248 aa)). Residues His-429 and Asp-477 each act as charge relay system in the active site. Ser-582 (charge relay system) is an active-site residue.

Belongs to the peptidase S1 family. CLIP subfamily.

Its subcellular location is the secreted. In terms of biological role, serine protease which, by converting prophenoloxidase 1 (PPO1) into its active form, plays an essential role in the melanization immune response to physical or septic wounding. May function in diverse PPO1-activating cascades that are negatively controlled by different serpin proteins; Spn27A and Spn28D in the hemolymph, and Spn28D and Spn77BA in the trachea. Also required in the systematic wound response by mediating the redox-dependent activation of the JNK cytoprotective cascade in neuronal tissues after integument wounding. In Drosophila melanogaster (Fruit fly), this protein is Serine protease Hayan.